Here is a 205-residue protein sequence, read N- to C-terminus: MIGRLRGVLIEKQAPEVLIDVNGVGYELQMPLTSFYELPEVNQPTTVYTHFVVREDAQLLYGFITKQERSLFRLLIKANGVGPKLALTILSGMTASEFVGCVERDDIVTLVKLPGVGKKTAERLLVEMRDKLKSLMEASVGSEREFVLQSNYSPAPTVNSAEEDAISALISLGYKPPQASKAVSAAYKEGMDSETLIKAALKSML.

The tract at residues 1 to 64 (MIGRLRGVLI…EDAQLLYGFI (64 aa)) is domain I. The segment at 65 to 143 (TKQERSLFRL…SLMEASVGSE (79 aa)) is domain II. Residues 144-156 (REFVLQSNYSPAP) are flexible linker. The interval 157–205 (TVNSAEEDAISALISLGYKPPQASKAVSAAYKEGMDSETLIKAALKSML) is domain III.

Belongs to the RuvA family. As to quaternary structure, homotetramer. Forms an RuvA(8)-RuvB(12)-Holliday junction (HJ) complex. HJ DNA is sandwiched between 2 RuvA tetramers; dsDNA enters through RuvA and exits via RuvB. An RuvB hexamer assembles on each DNA strand where it exits the tetramer. Each RuvB hexamer is contacted by two RuvA subunits (via domain III) on 2 adjacent RuvB subunits; this complex drives branch migration. In the full resolvosome a probable DNA-RuvA(4)-RuvB(12)-RuvC(2) complex forms which resolves the HJ.

It is found in the cytoplasm. The RuvA-RuvB-RuvC complex processes Holliday junction (HJ) DNA during genetic recombination and DNA repair, while the RuvA-RuvB complex plays an important role in the rescue of blocked DNA replication forks via replication fork reversal (RFR). RuvA specifically binds to HJ cruciform DNA, conferring on it an open structure. The RuvB hexamer acts as an ATP-dependent pump, pulling dsDNA into and through the RuvAB complex. HJ branch migration allows RuvC to scan DNA until it finds its consensus sequence, where it cleaves and resolves the cruciform DNA. The protein is Holliday junction branch migration complex subunit RuvA of Shewanella sp. (strain MR-7).